Here is a 387-residue protein sequence, read N- to C-terminus: Pepsin II-1 (387 aa).

Residues 1–15 (MKWLLLLGLLALSEC) form the signal peptide. The propeptide at 16–59 (IVHKVPLVRKKSLRKNLIEKGLLQDYLKTHTPNLATKYFPKETF) is activation peptide. A Peptidase A1 domain is found at 75-384 (YFGTISIGTP…DRANNQVGLA (310 aa)). Residue Asp-93 is part of the active site. A disulfide bridge links Cys-106 with Cys-111. Ser-129 is subject to Phosphoserine. Cys-267 and Cys-271 are joined by a disulfide. Asp-276 is an active-site residue. A disulfide bridge links Cys-310 with Cys-343.

The protein belongs to the peptidase A1 family.

It is found in the secreted. The catalysed reaction is Preferential cleavage: hydrophobic, preferably aromatic, residues in P1 and P1' positions. Cleaves 1-Phe-|-Val-2, 4-Gln-|-His-5, 13-Glu-|-Ala-14, 14-Ala-|-Leu-15, 15-Leu-|-Tyr-16, 16-Tyr-|-Leu-17, 23-Gly-|-Phe-24, 24-Phe-|-Phe-25 and 25-Phe-|-Tyr-26 bonds in the B chain of insulin.. In terms of biological role, shows particularly broad specificity; although bonds involving phenylalanine and leucine are preferred, many others are also cleaved to some extent. The chain is Pepsin II-1 from Oryctolagus cuniculus (Rabbit).